Consider the following 620-residue polypeptide: Probable potassium transport system protein Kup (620 aa).

12 helical membrane passes run 11 to 31 (LAFLAMGIVYGDIGTSPLYAF), 51 to 71 (ILSLVFWAFVLIVSIKYLLLV), 100 to 120 (IAMLLGILATGFFFGEAVITP), 138 to 158 (LAPYVLPIAMMIIVALFAVQA), 167 to 187 (FFAPVMLLWFLVLALLGAHAI), 202 to 222 (AVHFVLLHGQHTLFILGLVVL), 246 to 266 (WFALVMPSLLLNYFGQGAYLL), 288 to 308 (LILLATFATVIASQAVISGIF), 334 to 354 (GQIYVPAANMLLFVAVIFVML), 364 to 384 (AAYGIAVTAIMMISSLLLVLV), 396 to 416 (VVTIGIAFIGMDTLLLASTST), and 418 to 438 (LMEGGWLPLLLGCVVFIVMYI).

It belongs to the HAK/KUP transporter (TC 2.A.72) family.

Its subcellular location is the cell inner membrane. It catalyses the reaction K(+)(in) + H(+)(in) = K(+)(out) + H(+)(out). Transport of potassium into the cell. Likely operates as a K(+):H(+) symporter. This chain is Probable potassium transport system protein Kup, found in Vibrio cholerae serotype O1 (strain ATCC 39541 / Classical Ogawa 395 / O395).